The sequence spans 566 residues: MKKFNIKSLTLLIVLLPLIVNANNIDSHLLEQNDIAKYVAQSDTVGSFFERFSALLNYPIVVSKQAAKKRISGEFDLSNPEEMLEKLTLLVGLIWYKDGNALYIYDSGELISKVILLENISLNYLIQYLKDANLYDHRYPIRGNISDKTFYISGPPALVELVANTATLLDKQVSSIGTDKVNFGVIKLKNTFVSDRTYNMRGEDIVIPGVATVVERLLNNGKALSNRQAQNDPMPPFNITQKVSEDSNDFSFSSVTNSSILEDVSLIAYPETNSILVKGNDQQIQIIRDIITQLDVAKRHIELSLWIIDIDKSELNNLGVNWQGTASFGDSFGASFNMSSSASISTLDGNKFIASVMALNQKKKANVVSRPVILTQENIPAIFDNNRTFYVSLVGERNSSLEHVTYGTLINVIPRFSSRGQIEMSLTIEDGTGNSQSNYNYNNENTSVLPEVGRTKISTIARVPQGKSLLIGGYTHETNSNEIISIPFLSSIPVIGNVFKYKTSNISNIVRVFLIQPREIKESSYYNTAEYKSLISEREIQKTTQIIPSETTLLEDEKSLVSYLNY.

The N-terminal stretch at 1–22 is a signal peptide; that stretch reads MKKFNIKSLTLLIVLLPLIVNA.

Belongs to the bacterial secretin family. T3SS SctC subfamily. As to quaternary structure, the core secretion machinery of the T3SS is composed of approximately 20 different proteins, including cytoplasmic components, a base, an export apparatus and a needle. This subunit is part of the base, which anchors the injectisome in the bacterial cell envelope. Forms a stable homooligomeric complex. Interacts with the pilotin MxiM/SctG and the inner membrane ring outer protein MxiJ/SctJ.

Its subcellular location is the cell outer membrane. Component of the type III secretion system (T3SS), also called injectisome, which is used to inject bacterial effector proteins into eukaryotic host cells. Forms a ring-shaped multimeric structure with an apparent central pore in the outer membrane. Necessary for the secretion of Ipa invasins. In Shigella flexneri, this protein is Type 3 secretion system secretin.